We begin with the raw amino-acid sequence, 376 residues long: Penicillin V acylase (376 aa).

The N-terminal stretch at 1-29 is a signal peptide; sequence MIKNNKRIKSTVCALSLVALTLGSAVSLA. The active-site Nucleophile is Cys30.

This sequence belongs to the peptidase C59 family. As to quaternary structure, homotetramer. Dimer of dimers.

It is found in the periplasm. It catalyses the reaction a penicillin + H2O = 6-aminopenicillanate + a carboxylate. With respect to regulation, exhibits uncharacteristic kinetic behavior, showing positive cooperativity coupled with substrate inhibition. Penicillin acylase activity is enhanced in the presence of the reducing agent DTT, indicating active sulfhydryl group in the enzyme. Also shows enhanced activity in presence of organic solvents and detergents. Inhibited largely in presence of Ag(+), Hg(2+) and Cd(2+) ions, which have strong affinities for sulfhydryl groups. Activity is also inhibited by bile salts. In terms of biological role, catalyzes the hydrolysis of penicillin V to 6-aminopenicillanate (6-APA). Shows high specificity towards penicillin V. Can use other beta-lactam substrates, including penicillin G, ampicillin, cephalexin, cloxacillin and dicloxacillin, but at a rate less than 10% of that of penicillin V. Does not show any activity with glyco- or tauro-conjugated bile salts. This Pectobacterium atrosepticum (strain SCRI 1043 / ATCC BAA-672) (Erwinia carotovora subsp. atroseptica) protein is Penicillin V acylase.